A 455-amino-acid chain; its full sequence is Probable glucarate dehydratase (455 aa).

4 residues coordinate substrate: His42, Thr113, Tyr160, and Lys215. Catalysis depends on Lys217, which acts as the Proton acceptor. The Mg(2+) site is built by Asp245, Glu276, and Asn299. Residue 245–247 (DPN) participates in substrate binding. Residues Asn299, 349–351 (HSN), His378, and Arg431 each bind substrate. The Proton acceptor role is filled by His349.

Belongs to the mandelate racemase/muconate lactonizing enzyme family. GlucD subfamily. The cofactor is Mg(2+).

It catalyses the reaction D-glucarate = 5-dehydro-4-deoxy-D-glucarate + H2O. It participates in carbohydrate acid metabolism; D-glucarate degradation; 2,5-dioxopentanoate from D-glucarate: step 1/2. Functionally, catalyzes the dehydration of glucarate to 5-keto-4-deoxy-D-glucarate (5-kdGluc). The sequence is that of Probable glucarate dehydratase (gudD) from Bacillus subtilis (strain 168).